We begin with the raw amino-acid sequence, 90 residues long: Co-chaperonin GroES (90 aa).

It belongs to the GroES chaperonin family. Heptamer of 7 subunits arranged in a ring. Interacts with the chaperonin GroEL.

The protein localises to the cytoplasm. Functionally, together with the chaperonin GroEL, plays an essential role in assisting protein folding. The GroEL-GroES system forms a nano-cage that allows encapsulation of the non-native substrate proteins and provides a physical environment optimized to promote and accelerate protein folding. GroES binds to the apical surface of the GroEL ring, thereby capping the opening of the GroEL channel. In Fusobacterium nucleatum subsp. nucleatum (strain ATCC 25586 / DSM 15643 / BCRC 10681 / CIP 101130 / JCM 8532 / KCTC 2640 / LMG 13131 / VPI 4355), this protein is Co-chaperonin GroES.